The chain runs to 66 residues: Large ribosomal subunit protein bL31 (66 aa).

Zn(2+) is bound by residues cysteine 16, cysteine 18, cysteine 36, and cysteine 39.

The protein belongs to the bacterial ribosomal protein bL31 family. Type A subfamily. In terms of assembly, part of the 50S ribosomal subunit. Zn(2+) serves as cofactor.

Functionally, binds the 23S rRNA. This Leptospira biflexa serovar Patoc (strain Patoc 1 / Ames) protein is Large ribosomal subunit protein bL31.